The following is a 500-amino-acid chain: Pyoverdin chromophore biosynthetic protein PvcC (500 aa).

FAD is required as a cofactor.

Its pathway is siderophore biosynthesis; pyoverdin biosynthesis. This Pseudomonas aeruginosa (strain ATCC 15692 / DSM 22644 / CIP 104116 / JCM 14847 / LMG 12228 / 1C / PRS 101 / PAO1) protein is Pyoverdin chromophore biosynthetic protein PvcC (pvcC).